We begin with the raw amino-acid sequence, 111 residues long: MMKGGMAGLMKQAQQMQEKMQKMQEELANAEVTGQSGGGLVSVVMTGRHDVKRVSIDQSLMSTDADDKEVLEDLIAAALNDAVRKIEQNSQDKMGSMTAGMQLPPGFKMPF.

Disordered regions lie at residues Met-1–Glu-25 and Asn-89–Phe-111.

Belongs to the YbaB/EbfC family. Homodimer.

The protein localises to the cytoplasm. It localises to the nucleoid. Binds to DNA and alters its conformation. May be involved in regulation of gene expression, nucleoid organization and DNA protection. The chain is Nucleoid-associated protein PSEEN1789 from Pseudomonas entomophila (strain L48).